Consider the following 107-residue polypeptide: Nucleoid-associated protein Oant_0022 (107 aa).

Belongs to the YbaB/EbfC family. As to quaternary structure, homodimer.

It is found in the cytoplasm. Its subcellular location is the nucleoid. Its function is as follows. Binds to DNA and alters its conformation. May be involved in regulation of gene expression, nucleoid organization and DNA protection. In Brucella anthropi (strain ATCC 49188 / DSM 6882 / CCUG 24695 / JCM 21032 / LMG 3331 / NBRC 15819 / NCTC 12168 / Alc 37) (Ochrobactrum anthropi), this protein is Nucleoid-associated protein Oant_0022.